A 170-amino-acid chain; its full sequence is Probable peptide methionine sulfoxide reductase (170 aa).

The protein belongs to the MsrA Met sulfoxide reductase family.

It is found in the cytoplasm. The protein resides in the nucleus. It carries out the reaction L-methionyl-[protein] + [thioredoxin]-disulfide + H2O = L-methionyl-(S)-S-oxide-[protein] + [thioredoxin]-dithiol. The catalysed reaction is [thioredoxin]-disulfide + L-methionine + H2O = L-methionine (S)-S-oxide + [thioredoxin]-dithiol. In terms of biological role, has an important function as a repair enzyme for proteins that have been inactivated by oxidation. Catalyzes the reversible oxidation-reduction of methionine sulfoxide in proteins to methionine. The chain is Probable peptide methionine sulfoxide reductase (mxr1) from Schizosaccharomyces pombe (strain 972 / ATCC 24843) (Fission yeast).